Reading from the N-terminus, the 890-residue chain is Calcium-transporting ATPase (890 aa).

Residues methionine 1–serine 47 lie on the Cytoplasmic side of the membrane. Residues alanine 48–threonine 68 form a helical membrane-spanning segment. The Extracellular portion of the chain corresponds to leucine 69–valine 78. A helical membrane pass occupies residues aspartate 79–arginine 99. Topologically, residues arginine 100–leucine 238 are cytoplasmic. A helical transmembrane segment spans residues glutamate 239–alanine 258. Topologically, residues valine 259–methionine 270 are extracellular. The helical transmembrane segment at phenylalanine 271–alanine 288 threads the bilayer. Ca(2+)-binding residues include valine 279, alanine 280, isoleucine 282, and glutamate 284. The Cytoplasmic portion of the chain corresponds to isoleucine 289 to isoleucine 688. Residue aspartate 326 is the 4-aspartylphosphate intermediate of the active site. Residues aspartate 633 and aspartate 637 each coordinate Mg(2+). Residues arginine 689–phenylalanine 708 traverse the membrane as a helical segment. The Ca(2+) site is built by asparagine 699 and glutamate 702. Residues alanine 709 to leucine 718 are Extracellular-facing. Residues valine 719–glycine 739 traverse the membrane as a helical segment. Positions 727, 730, and 731 each coordinate Ca(2+). The Cytoplasmic segment spans residues methionine 740–valine 759. A helical membrane pass occupies residues phenylalanine 760–alanine 782. Over phenylalanine 783–glutamine 798 the chain is Extracellular. A helical transmembrane segment spans residues threonine 799–serine 818. The Cytoplasmic segment spans residues glutamate 819 to asparagine 830. The chain crosses the membrane as a helical span at residues leucine 831–tyrosine 849. Residues tyrosine 850–proline 864 lie on the Extracellular side of the membrane. Residues glycine 865 to leucine 885 traverse the membrane as a helical segment. Residues leucine 886–lysine 890 lie on the Cytoplasmic side of the membrane.

Belongs to the cation transport ATPase (P-type) (TC 3.A.3) family. Type IIA subfamily. Phosphorylated in a Ca(2+)-dependent manner starting 4 hours after shifting to sporulation medium.

Its subcellular location is the cell membrane. The catalysed reaction is Ca(2+)(in) + ATP + H2O = Ca(2+)(out) + ADP + phosphate + H(+). Functionally, this magnesium-dependent enzyme catalyzes the hydrolysis of ATP coupled with the transport of calcium. In Bacillus subtilis (strain 168), this protein is Calcium-transporting ATPase (yloB).